Reading from the N-terminus, the 278-residue chain is Elongation factor Ts (278 aa).

The segment at 82 to 85 (TDFV) is involved in Mg(2+) ion dislocation from EF-Tu.

The protein belongs to the EF-Ts family.

It is found in the cytoplasm. Associates with the EF-Tu.GDP complex and induces the exchange of GDP to GTP. It remains bound to the aminoacyl-tRNA.EF-Tu.GTP complex up to the GTP hydrolysis stage on the ribosome. The protein is Elongation factor Ts of Streptomyces griseus subsp. griseus (strain JCM 4626 / CBS 651.72 / NBRC 13350 / KCC S-0626 / ISP 5235).